The following is a 695-amino-acid chain: ATP-dependent permease MDL1, mitochondrial (695 aa).

Residues 1–100 (MIVRMIRLCK…RLFVLSKPES (100 aa)) constitute a mitochondrion transit peptide. The next 5 helical transmembrane spans lie at 103 to 123 (IGLA…VPSV), 156 to 176 (FTAL…RIII), 242 to 262 (FVGF…MMIL), 337 to 357 (GLFF…LLLV), and 372 to 392 (LSSF…LSSF). The ABC transmembrane type-1 domain maps to 103 to 398 (IGLALLLILI…LSSFYSELMK (296 aa)). The ABC transporter domain occupies 432 to 673 (IVFKNVSFTY…PNSELNALLA (242 aa)). An ATP-binding site is contributed by 467 to 474 (GPSGSGKS).

It belongs to the ABC transporter superfamily. ABCB family. Mitochondrial peptide exporter (TC 3.A.1.212) subfamily.

The protein resides in the mitochondrion inner membrane. In terms of biological role, mediates export of peptides with molecular masses of 2100 to 600 daltons generated upon proteolysis of mitochondrial inner membrane proteins. This chain is ATP-dependent permease MDL1, mitochondrial (MDL1), found in Saccharomyces cerevisiae (strain ATCC 204508 / S288c) (Baker's yeast).